Here is a 465-residue protein sequence, read N- to C-terminus: UDP-N-acetylmuramate--L-alanine ligase (465 aa).

An ATP-binding site is contributed by 112–118 (GTHGKTT).

This sequence belongs to the MurCDEF family.

It localises to the cytoplasm. The enzyme catalyses UDP-N-acetyl-alpha-D-muramate + L-alanine + ATP = UDP-N-acetyl-alpha-D-muramoyl-L-alanine + ADP + phosphate + H(+). Its pathway is cell wall biogenesis; peptidoglycan biosynthesis. Its function is as follows. Cell wall formation. The protein is UDP-N-acetylmuramate--L-alanine ligase of Burkholderia thailandensis (strain ATCC 700388 / DSM 13276 / CCUG 48851 / CIP 106301 / E264).